The chain runs to 663 residues: DNA ligase (663 aa).

Residues 31–35, 80–81, and Glu-110 each bind NAD(+); these read DFEYD and SL. Lys-112 functions as the N6-AMP-lysine intermediate in the catalytic mechanism. Residues Arg-133, Glu-168, Lys-284, and Lys-308 each coordinate NAD(+). Residues Cys-402, Cys-405, Cys-420, and Cys-425 each contribute to the Zn(2+) site. The region spanning 586 to 663 is the BRCT domain; sequence IKDNRFEGKT…DEDKFRKMIE (78 aa).

This sequence belongs to the NAD-dependent DNA ligase family. LigA subfamily. It depends on Mg(2+) as a cofactor. The cofactor is Mn(2+).

The enzyme catalyses NAD(+) + (deoxyribonucleotide)n-3'-hydroxyl + 5'-phospho-(deoxyribonucleotide)m = (deoxyribonucleotide)n+m + AMP + beta-nicotinamide D-nucleotide.. Its function is as follows. DNA ligase that catalyzes the formation of phosphodiester linkages between 5'-phosphoryl and 3'-hydroxyl groups in double-stranded DNA using NAD as a coenzyme and as the energy source for the reaction. It is essential for DNA replication and repair of damaged DNA. The polypeptide is DNA ligase (Acetivibrio thermocellus (strain ATCC 27405 / DSM 1237 / JCM 9322 / NBRC 103400 / NCIMB 10682 / NRRL B-4536 / VPI 7372) (Clostridium thermocellum)).